A 760-amino-acid chain; its full sequence is General transcription and DNA repair factor IIH helicase subunit XPD (760 aa).

Residues 7 to 283 enclose the Helicase ATP-binding domain; that stretch reads GLLVYFPYDY…KETDEQRLRE (277 aa). 42–49 contributes to the ATP binding site; the sequence is MPSGTGKT. Positions 116, 134, 155, and 190 each coordinate [4Fe-4S] cluster. Positions 234-237 match the DEAH box motif; it reads DEAH. The segment at 438-637 is mediates interaction with MMS19; that stretch reads MDASLAIKPV…TQSRILKARL (200 aa). The short motif at 682 to 695 is the Nuclear localization signal element; that stretch reads KRFARADKRGKLPR.

This sequence belongs to the helicase family. RAD3/XPD subfamily. In terms of assembly, component of the 7-subunit TFIIH core complex composed of XPB/ERCC3, XPD/ERCC2, GTF2H1, GTF2H2, GTF2H3, GTF2H4 and GTF2H5, which is active in NER. The core complex associates with the 3-subunit CDK-activating kinase (CAK) module composed of CCNH/cyclin H, CDK7 and MNAT1 to form the 10-subunit holoenzyme (holo-TFIIH) active in transcription. The interaction with GTF2H2 results in the stimulation of the 5'--&gt;3' helicase activity. Component of the MMXD complex, which includes CIAO1, ERCC2, CIAO2B, MMS19 and SLC25A5. Interacts with CIAO1 and CIAO2B; the interaction WITH CIAO2B is direct. Interacts with ATF7IP. Interacts directly with MMS19. Part of TBP-based Pol II pre-initiation complex (PIC), in which Pol II core assembles with general transcription factors and other specific initiation factors including GTF2E1, GTF2E2, GTF2F1, GTF2F2, TCEA1, ERCC2, ERCC3, GTF2H2, GTF2H3, GTF2H4, GTF2H5, GTF2A1, GTF2A2, GTF2B and TBP; this large multi-subunit PIC complex mediates DNA unwinding and targets Pol II core to the transcription start site where the first phosphodiester bond forms. The cofactor is Mg(2+). [4Fe-4S] cluster serves as cofactor. ISGylated.

It is found in the nucleus. The protein resides in the cytoplasm. It localises to the cytoskeleton. The protein localises to the spindle. It carries out the reaction Couples ATP hydrolysis with the unwinding of duplex DNA at the replication fork by translocating in the 5'-3' direction. This creates two antiparallel DNA single strands (ssDNA). The leading ssDNA polymer is the template for DNA polymerase III holoenzyme which synthesizes a continuous strand.. The catalysed reaction is ATP + H2O = ADP + phosphate + H(+). In terms of biological role, ATP-dependent 5'-3' DNA helicase, component of the general transcription and DNA repair factor IIH (TFIIH) core complex, which is involved in general and transcription-coupled nucleotide excision repair (NER) of damaged DNA and, when complexed to CDK-activating kinase (CAK), involved in transcription by RNA polymerase II. In NER, TFIIH acts by opening DNA around the lesion to allow the excision of the damaged oligonucleotide and its replacement by a new DNA fragment. The ATP-dependent helicase activity of XPD/ERCC2 is required for DNA opening. In transcription, TFIIH has an essential role in transcription initiation. When the pre-initiation complex (PIC) has been established, TFIIH is required for promoter opening and promoter escape. Phosphorylation of the C-terminal tail (CTD) of the largest subunit of RNA polymerase II by the kinase module CAK controls the initiation of transcription. XPD/ERCC2 acts by forming a bridge between CAK and the core-TFIIH complex. Involved in the regulation of vitamin-D receptor activity. As part of the mitotic spindle-associated MMXD complex it plays a role in chromosome segregation. Might have a role in aging process and could play a causative role in the generation of skin cancers. This is General transcription and DNA repair factor IIH helicase subunit XPD (ERCC2) from Bos taurus (Bovine).